The primary structure comprises 90 residues: WAP four-disulfide core domain protein 12 (90 aa).

An N-terminal signal peptide occupies residues 1 to 23 (MGSSSFLVLMVSLALVTLVAVEG). The region spanning 27-74 (GIEKAGVCPADNVRCFKSDPPQCHTDQDCLGERKCCYLHCGFKCVIPV) is the WAP domain. Cystine bridges form between C34–C62, C41–C66, C49–C61, and C55–C70.

The protein resides in the secreted. Antibacterial protein. Putative acid-stable proteinase inhibitor. The polypeptide is WAP four-disulfide core domain protein 12 (WFDC12) (Pongo abelii (Sumatran orangutan)).